A 132-amino-acid chain; its full sequence is MAPKAEKKPAEKAPAPKAEKKIAKEGGTSEIVKKKKKTKKSTETYKIYIFKVLKQVHPDIGISGKAMGIMNSFINDIFEKLAQESSRLARYNKKPTITSREIQTAVRLVLPGELAKHAVSEGTKAVTKFTSS.

Residues 1-11 (MAPKAEKKPAE) show a composition bias toward basic and acidic residues. The disordered stretch occupies residues 1–41 (MAPKAEKKPAEKAPAPKAEKKIAKEGGTSEIVKKKKKTKKS). At Ala-2 the chain carries N,N,N-trimethylalanine; alternate. Residue Ala-2 is modified to N,N-dimethylalanine; alternate. Ala-2 bears the N-methylalanine; alternate mark. Lys-4 carries the post-translational modification N6-methyllysine. 4 positions are modified to N6-acetyllysine: Lys-7, Lys-12, Lys-20, and Lys-21. A Glycyl lysine isopeptide (Lys-Gly) (interchain with G-Cter in ubiquitin) cross-link involves residue Lys-128.

This sequence belongs to the histone H2B family. The nucleosome is a histone octamer containing two molecules each of H2A, H2B, H3 and H4 assembled in one H3-H4 heterotetramer and two H2A-H2B heterodimers. The octamer wraps approximately 147 bp of DNA. In terms of processing, can be acetylated to form H2BK6ac, H2BK33ac and H2BK34ac. Monoubiquitinated by BRE1 to form H2BK143ub1 and deubiquitinated by UBP26. Required for heterochromatic histone H3 di- and trimethylation at H3K4me. May give a specific tag for epigenetic transcriptional activation.

It is found in the nucleus. The protein resides in the chromosome. Its function is as follows. Core component of nucleosome. Nucleosomes wrap and compact DNA into chromatin, limiting DNA accessibility to the cellular machineries which require DNA as a template. Histones thereby play a central role in transcription regulation, DNA repair, DNA replication and chromosomal stability. DNA accessibility is regulated via a complex set of post-translational modifications of histones, also called histone code, and nucleosome remodeling. In Arabidopsis thaliana (Mouse-ear cress), this protein is Histone H2B.9.